The primary structure comprises 149 residues: MABWDKVNSVWSAVEQNITAIGQNILLRLFEQYPESEDYFPKLKNKSLGELKDTADIKAQADTVLRALGNIVKKKGDHSQPVKALAATHITTHKIPPHYFTKITTIAVGVLSEMYPSEMNAQAQAAFSGAFKNICSDIEKEYKAANFQG.

A2 carries the N-acetylalanine modification. A Globin domain is found at 2–143 (ABWDKVNSVW…ICSDIEKEYK (142 aa)). A heme b-binding site is contributed by H89.

The protein belongs to the globin family. In terms of assembly, monomeric.

Its subcellular location is the cytoplasm. It localises to the sarcoplasm. The enzyme catalyses Fe(III)-heme b-[protein] + nitric oxide + H2O = Fe(II)-heme b-[protein] + nitrite + 2 H(+). The catalysed reaction is H2O2 + AH2 = A + 2 H2O. Functionally, monomeric heme protein which primary function is to store oxygen and facilitate its diffusion within muscle tissues. Reversibly binds oxygen through a pentacoordinated heme iron and enables its timely and efficient release as needed during periods of heightened demand. Depending on the oxidative conditions of tissues and cells, and in addition to its ability to bind oxygen, it also has a nitrite reductase activity whereby it regulates the production of bioactive nitric oxide. Under stress conditions, like hypoxia and anoxia, it also protects cells against reactive oxygen species thanks to its pseudoperoxidase activity. The sequence is that of Myoglobin (mb) from Hemitriakis japanica (Japanese topeshark).